The primary structure comprises 213 residues: Orotate phosphoribosyltransferase (213 aa).

Lys26 lines the 5-phospho-alpha-D-ribose 1-diphosphate pocket. 34-35 (FF) contacts orotate. 5-phospho-alpha-D-ribose 1-diphosphate contacts are provided by residues 72–73 (YK), Arg99, Lys100, Lys103, His105, and 124–132 (DDVITAGTA). Positions 128 and 156 each coordinate orotate.

It belongs to the purine/pyrimidine phosphoribosyltransferase family. PyrE subfamily. In terms of assembly, homodimer. Mg(2+) serves as cofactor.

The enzyme catalyses orotidine 5'-phosphate + diphosphate = orotate + 5-phospho-alpha-D-ribose 1-diphosphate. Its pathway is pyrimidine metabolism; UMP biosynthesis via de novo pathway; UMP from orotate: step 1/2. In terms of biological role, catalyzes the transfer of a ribosyl phosphate group from 5-phosphoribose 1-diphosphate to orotate, leading to the formation of orotidine monophosphate (OMP). In Photorhabdus laumondii subsp. laumondii (strain DSM 15139 / CIP 105565 / TT01) (Photorhabdus luminescens subsp. laumondii), this protein is Orotate phosphoribosyltransferase.